A 366-amino-acid chain; its full sequence is tRNA pseudouridine synthase B (366 aa).

Catalysis depends on Asp-44, which acts as the Nucleophile.

Belongs to the pseudouridine synthase TruB family. Type 1 subfamily.

The enzyme catalyses uridine(55) in tRNA = pseudouridine(55) in tRNA. Responsible for synthesis of pseudouridine from uracil-55 in the psi GC loop of transfer RNAs. The sequence is that of tRNA pseudouridine synthase B from Treponema pallidum (strain Nichols).